Consider the following 980-residue polypeptide: Glutamate receptor ionotropic, kainate 5 (980 aa).

Residues 1-14 (MPAELLLLLIVAFA) form the signal peptide. The Extracellular segment spans residues 15 to 544 (SPSCQVLSSL…YFSFLDPFSP (530 aa)). Disulfide bonds link Cys36–Cys292, Cys83–Cys334, and Cys165–Cys170. 10 N-linked (GlcNAc...) asparagine glycosylation sites follow: Asn219, Asn271, Asn285, Asn322, Asn372, Asn394, Asn400, Asn407, Asn414, and Asn478. A helical membrane pass occupies residues 545-565 (AVWLFMLLAYLAVSCVLFLAA). The Cytoplasmic portion of the chain corresponds to 566-622 (RLSPYEWYNPHPCLRARPHILENQYTLGNSLWFPVGGFMQQGSEIMPRALSTRCVSG). Residues 623-643 (VWWAFTLIIISSYTANLAAFL) traverse the membrane as a helical segment. Residues 644–803 (TVQRMEVPVE…HRAKGLGMEN (160 aa)) are Extracellular-facing. N-linked (GlcNAc...) asparagine glycosylation occurs at Asn735. Residues 804 to 824 (IGGIFIVLICGLIIAVFVAVM) form a helical membrane-spanning segment. At 825–980 (EFIWSTRRSA…AGPRELAEHE (156 aa)) the chain is on the cytoplasmic side. 2 disordered regions span residues 891–927 (YSAGAGGDAGSAHGGPQRLLDDPGPPSGARPAAPTPC) and 944–980 (ASGAGAPPRGLGVPAEATSPPRPRPGPAGPRELAEHE). Gly residues predominate over residues 894–903 (GAGGDAGSAH).

The protein belongs to the glutamate-gated ion channel (TC 1.A.10.1) family. GRIK5 subfamily. In terms of assembly, homotetramer. Heterotetramer with GRIK2. Can form functional heteromeric receptors with GRIK1 and GRIK2. Can form functional heteromeric receptors with GRIK3.

It localises to the cell membrane. It is found in the postsynaptic cell membrane. The protein localises to the presynaptic cell membrane. Ionotropic glutamate receptor that functions as a cation-permeable ligand-gated ion channel, gated by L-glutamate and the glutamatergic agonist kainic acid. Cannot form functional channels on its own and produces channel activity only in heteromeric assembly with GRIK1 and GRIK2 subunits. Can form functional heteromeric receptors with GRIK3. The chain is Glutamate receptor ionotropic, kainate 5 (GRIK5) from Homo sapiens (Human).